Consider the following 271-residue polypeptide: Neurexophilin-1 (271 aa).

Residues 1 to 21 (MQAACWYVLFLLQPTVYLVTC) form the signal peptide. The tract at residues 22–97 (ANLTNGGKSE…WDWLRNSTDL (76 aa)) is II. N-linked (GlcNAc...) asparagine glycans are attached at residues N23, N68, N93, N146, N156, and N162. The segment at 98–176 (QEPRPRAKRR…LVPPTKIVEF (79 aa)) is III. Residues 177 to 185 (DLAQQTVID) are IV (linker domain). A v (Cys-rich) region spans residues 186 to 271 (AKDSKSFNCR…HSDTPYFPSG (86 aa)).

It belongs to the neurexophilin family.

The protein localises to the secreted. May be signaling molecules that resemble neuropeptides and that act by binding to alpha-neurexins and possibly other receptors. The sequence is that of Neurexophilin-1 (NXPH1) from Homo sapiens (Human).